We begin with the raw amino-acid sequence, 317 residues long: Aspartate carbamoyltransferase catalytic subunit (317 aa).

Positions 65 and 66 each coordinate carbamoyl phosphate. Lys93 contributes to the L-aspartate binding site. Carbamoyl phosphate contacts are provided by Arg115, His145, and Gln148. L-aspartate contacts are provided by Arg178 and Arg233. Residues Gly274 and Pro275 each contribute to the carbamoyl phosphate site.

This sequence belongs to the aspartate/ornithine carbamoyltransferase superfamily. ATCase family. Heterododecamer (2C3:3R2) of six catalytic PyrB chains organized as two trimers (C3), and six regulatory PyrI chains organized as three dimers (R2).

The catalysed reaction is carbamoyl phosphate + L-aspartate = N-carbamoyl-L-aspartate + phosphate + H(+). It functions in the pathway pyrimidine metabolism; UMP biosynthesis via de novo pathway; (S)-dihydroorotate from bicarbonate: step 2/3. Functionally, catalyzes the condensation of carbamoyl phosphate and aspartate to form carbamoyl aspartate and inorganic phosphate, the committed step in the de novo pyrimidine nucleotide biosynthesis pathway. This Bordetella parapertussis (strain 12822 / ATCC BAA-587 / NCTC 13253) protein is Aspartate carbamoyltransferase catalytic subunit.